The primary structure comprises 400 residues: Phosphoglycerate kinase (400 aa).

Substrate contacts are provided by residues 23–25 (DLN), R38, 61–64 (HFGR), R120, and R153. Residues K203, E325, and 355–358 (GGDT) each bind ATP.

This sequence belongs to the phosphoglycerate kinase family. As to quaternary structure, monomer.

The protein resides in the cytoplasm. The catalysed reaction is (2R)-3-phosphoglycerate + ATP = (2R)-3-phospho-glyceroyl phosphate + ADP. The protein operates within carbohydrate degradation; glycolysis; pyruvate from D-glyceraldehyde 3-phosphate: step 2/5. The protein is Phosphoglycerate kinase of Allorhizobium ampelinum (strain ATCC BAA-846 / DSM 112012 / S4) (Agrobacterium vitis (strain S4)).